The sequence spans 640 residues: Zinc finger protein 549 (640 aa).

The 114-residue stretch at 27 to 140 (VTFEDIAVYF…PYTSVASGKW (114 aa)) folds into the KRAB domain. The C2H2-type 1; degenerate zinc-finger motif lies at 217–241 (FQQRRYKCEQVFNEKVHVTEHQRVH). Residue Lys223 forms a Glycyl lysine isopeptide (Lys-Gly) (interchain with G-Cter in SUMO2) linkage. A C2H2-type 2; degenerate zinc finger spans residues 247 to 269 (YKRREYGKSLNSKYLFVEHQRTH). 13 C2H2-type zinc fingers span residues 275 to 298 (YVCN…QRIH), 304 to 326 (YVCI…QRTH), 332 to 355 (YVCN…QRIH), 361 to 383 (YVCM…QRVH), 389 to 411 (YQCS…HRIH), 417 to 439 (YECK…QRIH), 445 to 467 (YVCI…QRIH), 473 to 495 (YECS…HKIH), 501 to 523 (YECS…QRIH), 529 to 551 (CECN…QKVH), 557 to 579 (CECS…QKVH), 585 to 607 (YNCT…QRIH), and 613 to 635 (YECG…QKVH).

This sequence belongs to the krueppel C2H2-type zinc-finger protein family.

It localises to the nucleus. Its function is as follows. May be involved in transcriptional regulation. This is Zinc finger protein 549 (ZNF549) from Homo sapiens (Human).